Here is a 296-residue protein sequence, read N- to C-terminus: uncharacterized protein (296 aa).

The N-terminal 57 residues, 1–57 (MTSFLSFSAISAHPPTFSGASFRPRSFSPRLFKSCVKCTYAEAGLSSASWSAPIDIV), are a transit peptide targeting the chloroplast.

It belongs to the NAD(P)-dependent epimerase/dehydratase family.

The protein resides in the plastid. The protein localises to the chloroplast. It localises to the plastoglobule. This is an uncharacterized protein from Arabidopsis thaliana (Mouse-ear cress).